A 309-amino-acid polypeptide reads, in one-letter code: Taste receptor type 2 member 31 (309 aa).

At 1–2 (MT) the chain is on the extracellular side. Residues 3-23 (TFIPIIFSSLVVVIFVIGNFA) traverse the membrane as a helical segment. Residues 24 to 55 (NGFIALVNSIEWFKRQKISFADQILTALAVSR) are Cytoplasmic-facing. A helical membrane pass occupies residues 56 to 76 (VGLLWVLLLNWYSTVLNPAFY). At 77–100 (SVEVRTTAYNVWAVTGHFSNWLAT) the chain is on the extracellular side. The helical transmembrane segment at 101–121 (SLSIFYLLKIANFSNLIFLHL) threads the bilayer. Topologically, residues 122–126 (KRRVK) are cytoplasmic. The chain crosses the membrane as a helical span at residues 127-147 (SVILVMLLGPLLFLACQLFMI). Residues 148–181 (NMKEIVRTKEYEGNMTWKIKLRSAVYLSDATVTT) are Extracellular-facing. N-linked (GlcNAc...) asparagine glycosylation occurs at Asn161. Residues 182-202 (LGNLVPFTLTLLCFLLLICSL) traverse the membrane as a helical segment. At 203 to 229 (CKHLKKMQLHGKGSQDPSTKVHIKVLQ) the chain is on the cytoplasmic side. Residues 230–250 (TVISFLLLCAIYFLSIMISVW) traverse the membrane as a helical segment. At 251–259 (SFGSLKNKP) the chain is on the extracellular side. Residues 260-280 (VFMFCKAMRFSYPSIHPFILI) traverse the membrane as a helical segment. The Cytoplasmic segment spans residues 281–309 (WGNKKLKQTFLSVLRQVRYWVKGEKPSSP).

This sequence belongs to the G-protein coupled receptor T2R family.

Its subcellular location is the membrane. Receptor that may play a role in the perception of bitterness and is gustducin-linked. May play a role in sensing the chemical composition of the gastrointestinal content. The activity of this receptor may stimulate alpha gustducin, mediate PLC-beta-2 activation and lead to the gating of TRPM5. The polypeptide is Taste receptor type 2 member 31 (TAS2R31) (Pan troglodytes (Chimpanzee)).